The following is a 244-amino-acid chain: Glutathione-independent glyoxalase hsp3101 (244 aa).

Catalysis depends on residues cysteine 139, histidine 140, and glutamate 173.

Belongs to the peptidase C56 family. HSP31-like subfamily.

It is found in the cytoplasm. The protein resides in the nucleus. It catalyses the reaction methylglyoxal + H2O = (R)-lactate + H(+). Functionally, catalyzes the conversion of methylglyoxal (MG) to D-lactate in a single glutathione (GSH)-independent step. May play a role in detoxifying endogenously produced glyoxals. Involved in protection against reactive oxygen species (ROS). The polypeptide is Glutathione-independent glyoxalase hsp3101 (Schizosaccharomyces pombe (strain 972 / ATCC 24843) (Fission yeast)).